Here is a 729-residue protein sequence, read N- to C-terminus: Neurochondrin (729 aa).

Residue S2 is modified to N-acetylserine. A Phosphoserine modification is found at S2. 2 S-palmitoyl cysteine lipidation sites follow: C3 and C4. R75 carries the asymmetric dimethylarginine modification. Phosphoserine is present on S448.

The protein belongs to the neurochondrin family. As to quaternary structure, interacts with MCHR1. Interacts with SEMA4C. Interacts with DIAPH1 (via FH3 domain). Interacts with GRM5. Palmitoylated. Palmitoylation by ZDHHC1, ZDHHC3 and ZDHHC11 regulates the association of NCDN with endosome membranes. May also be palmitoylated by ZDHHC7.

The protein localises to the cytoplasm. It is found in the cytosol. The protein resides in the endosome membrane. It localises to the cell projection. Its subcellular location is the dendrite. The protein localises to the postsynapse. Functionally, probably involved in signal transduction, in the nervous system, via increasing cell surface localization of GRM5 and positively regulating its signaling. Required for the spatial learning process. Acts as a negative regulator of Ca(2+)-calmodulin-dependent protein kinase 2 (CaMK2) phosphorylation. May play a role in modulating melanin-concentrating hormone-mediated functions via its interaction with MCHR1 that interferes with G protein-coupled signal transduction. May be involved in bone metabolism. May also be involved in neurite outgrowth. This Bos taurus (Bovine) protein is Neurochondrin (NCDN).